Consider the following 150-residue polypeptide: Protein A151R (150 aa).

It belongs to the asfivirus A151R family. As to quaternary structure, monomer. Homodimer. Interacts with protein B119L. Interacts with membrane protein E248R. The cofactor is Zn(2+).

May participate in a redox cascade for the formation of disulfide bonds in viral proteins. In African swine fever virus (isolate Pig/Kenya/KEN-50/1950) (ASFV), this protein is Protein A151R.